The primary structure comprises 510 residues: Adenosine deaminase 2 (510 aa).

An N-terminal signal peptide occupies residues 1-24 (MSGWPVLPALLLAVAMSSFHSATS). The dimerization stretch occupies residues 25-95 (RDEERNRLLM…GLMEKSAVFN (71 aa)). 2 residues coordinate Zn(2+): histidine 107 and histidine 109. Aspartate 110 is a binding site for substrate. Asparagine 122 is a glycosylation site (N-linked (GlcNAc...) asparagine). Residues 122–182 (NATYRPYCYF…TEFDNSLLRT (61 aa)) form a PRB domain region. A disulfide bridge links cysteine 132 with cysteine 156. Residue asparagine 171 is glycosylated (N-linked (GlcNAc...) asparagine). Substrate contacts are provided by residues 201–208 (WKKFKTIF), histidine 290, and glycine 323. Histidine 353 serves as a coordination point for Zn(2+). Glutamate 356 acts as the Proton donor in catalysis. Asparagine 375 is a glycosylation site (N-linked (GlcNAc...) asparagine). The active-site Proton acceptor is the histidine 381. Residue aspartate 438 participates in Zn(2+) binding. Residue aspartate 439 coordinates substrate.

The protein belongs to the metallo-dependent hydrolases superfamily. Adenosine and AMP deaminases family. ADGF subfamily. As to quaternary structure, homodimer. Interacts with adenosine receptors. Binds heparin. Zn(2+) serves as cofactor.

Its subcellular location is the secreted. The enzyme catalyses adenosine + H2O + H(+) = inosine + NH4(+). Functionally, adenosine deaminase that may contribute to the degradation of extracellular adenosine, a signaling molecule that controls a variety of cellular responses. Requires elevated adenosine levels for optimal enzyme activity. Binds to cell surfaces via proteoglycans and may play a role in the regulation of cell proliferation and differentiation, independently of its enzyme activity. This chain is Adenosine deaminase 2, found in Sus scrofa (Pig).